A 129-amino-acid polypeptide reads, in one-letter code: Glycine cleavage system H protein (129 aa).

The region spanning 23 to 104 (SVTVGITHHA…AYTAWLFKIK (82 aa)) is the Lipoyl-binding domain. K64 is modified (N6-lipoyllysine).

It belongs to the GcvH family. As to quaternary structure, the glycine cleavage system is composed of four proteins: P, T, L and H. (R)-lipoate is required as a cofactor.

In terms of biological role, the glycine cleavage system catalyzes the degradation of glycine. The H protein shuttles the methylamine group of glycine from the P protein to the T protein. This is Glycine cleavage system H protein from Thiobacillus denitrificans (strain ATCC 25259 / T1).